A 151-amino-acid polypeptide reads, in one-letter code: uncharacterized protein (151 aa).

The protein to M.jannaschii MJ1244 and MJ1245.

This is an uncharacterized protein from Methanothermobacter thermautotrophicus (strain ATCC 29096 / DSM 1053 / JCM 10044 / NBRC 100330 / Delta H) (Methanobacterium thermoautotrophicum).